Reading from the N-terminus, the 330-residue chain is MESVAAESAPAPENEHSQETPESNSSVYTTFMKSHRCYDLIPTSSKLVVFDTSLQVKKAFFALVTNGVRAAPLWDSKKQSFVGMLTITDFINILHRYYKSALVQIYELEEHKIETWREVYLQDSFKPLVCISPNASLFDAVSSLIRNKIHRLPVIDPESGNTLYILTHKRILKFLKLFITEFPKPEFMSKSLEELQIGTYANIAMVRTTTPVYVALGIFVQHRVSALPVVDEKGRVVDIYSKFDVINLAAEKTYNNLDVSVTKALQHRSHYFEGVLKCYLHETLEAIINRLVEAEVHRLVVVDEHDVVKGIVSLSDILQALVLTGGEKKP.

Low complexity predominate over residues 1–12 (MESVAAESAPAP). A disordered region spans residues 1–25 (MESVAAESAPAPENEHSQETPESNS). 3 CBS domains span residues 42-102 (PTSS…KSAL), 124-186 (SFKP…PKPE), and 197-259 (IGTY…NLDV). ADP contacts are provided by residues Arg69, 84 to 89 (MLTITD), Val129, 150 to 151 (HR), and Lys169. Residues Arg69, 84–89 (MLTITD), Val129, His150, 150–151 (HR), Lys169, Thr199, Ala204, 225–226 (SA), and 241–244 (SKFD) each bind AMP. ATP is bound by residues Arg69, 84–89 (MLTITD), Val129, 150–151 (HR), Arg151, and Lys169. Positions 137 to 158 (LFDAVSSLIRNKIHRLPVIDPE) match the AMPK pseudosubstrate motif. 241–244 (SKFD) is a binding site for ADP. Residue 241–244 (SKFD) coordinates ATP. The residue at position 260 (Ser260) is a Phosphoserine; by ULK1. Thr262 is modified (phosphothreonine; by ULK1). Arg268 lines the ADP pocket. Residue Arg268 coordinates AMP. Arg268 lines the ATP pocket. Residue Ser269 is modified to Phosphoserine; by ULK1. A CBS 4 domain is found at 271 to 328 (YFEGVLKCYLHETLEAIINRLVEAEVHRLVVVDEHDVVKGIVSLSDILQALVLTGGEK). Residues Leu276 and 297–298 (HR) each bind ADP. Residues Leu276, His297, 297-298 (HR), and 313-316 (SLSD) each bind AMP. Residues Leu276 and 297-298 (HR) each bind ATP.

It belongs to the 5'-AMP-activated protein kinase gamma subunit family. In terms of assembly, AMPK is a heterotrimer of an alpha catalytic subunit (PRKAA1 or PRKAA2), a beta (PRKAB1 or PRKAB2) and a gamma non-catalytic subunits (PRKAG1, PRKAG2 or PRKAG3). Interacts with FNIP1 and FNIP2. Phosphorylated by ULK1 and ULK2; leading to negatively regulate AMPK activity and suggesting the existence of a regulatory feedback loop between ULK1, ULK2 and AMPK. There is some ambiguity for a phosphosite: Ser-260/Thr-262. Post-translationally, glycosylated; O-GlcNAcylated by OGT, promoting the AMP-activated protein kinase (AMPK) activity. As to expression, highly expressed in heart and brain, also found in kidney, white adipose tissue, lung and spleen.

Functionally, AMP/ATP-binding subunit of AMP-activated protein kinase (AMPK), an energy sensor protein kinase that plays a key role in regulating cellular energy metabolism. In response to reduction of intracellular ATP levels, AMPK activates energy-producing pathways and inhibits energy-consuming processes: inhibits protein, carbohydrate and lipid biosynthesis, as well as cell growth and proliferation. AMPK acts via direct phosphorylation of metabolic enzymes, and by longer-term effects via phosphorylation of transcription regulators. Also acts as a regulator of cellular polarity by remodeling the actin cytoskeleton; probably by indirectly activating myosin. Gamma non-catalytic subunit mediates binding to AMP, ADP and ATP, leading to activate or inhibit AMPK: AMP-binding results in allosteric activation of alpha catalytic subunit (PRKAA1 or PRKAA2) both by inducing phosphorylation and preventing dephosphorylation of catalytic subunits. ADP also stimulates phosphorylation, without stimulating already phosphorylated catalytic subunit. ATP promotes dephosphorylation of catalytic subunit, rendering the AMPK enzyme inactive. The polypeptide is 5'-AMP-activated protein kinase subunit gamma-1 (Prkag1) (Rattus norvegicus (Rat)).